The primary structure comprises 369 residues: uncharacterized protein (369 aa).

4 disordered regions span residues 1–42, 60–107, 146–177, and 214–369; these read MRAA…NNNS, PSDL…KEDD, ALSMGRGDLDSESDISEKEDDNDGSFDGNSSG, and LSSH…GDDD. The segment covering 12 to 24 has biased composition (polar residues); that stretch reads VGPNNNNQSNTIN. Low complexity-rich tracts occupy residues 30–42 and 70–86; these read SNSNNINDNNNNS and YHSNYNNNNNNNNNSSS. Over residues 87 to 101 the composition is skewed to polar residues; sequence AITSGTVAPSSSMNN. Over residues 155–169 the composition is skewed to acidic residues; the sequence is DSESDISEKEDDNDG. Over residues 219 to 324 the composition is skewed to low complexity; it reads NNNNNSSNNN…NNNNNNSNIY (106 aa).

This is an uncharacterized protein from Dictyostelium discoideum (Social amoeba).